A 187-amino-acid chain; its full sequence is Ribosome-recycling factor (187 aa).

The protein belongs to the RRF family.

Its subcellular location is the cytoplasm. In terms of biological role, responsible for the release of ribosomes from messenger RNA at the termination of protein biosynthesis. May increase the efficiency of translation by recycling ribosomes from one round of translation to another. This is Ribosome-recycling factor from Bradyrhizobium sp. (strain BTAi1 / ATCC BAA-1182).